The chain runs to 76 residues: Probable insulin-like peptide alpha-type 1 (76 aa).

Positions 1–24 (MKTYSFFVLFIVFIFFISSSKSHS) are cleaved as a signal peptide. Disulfide bonds link C32-C60, C44-C73, and C48-C74.

The protein belongs to the insulin family.

The protein localises to the secreted. This Caenorhabditis elegans protein is Probable insulin-like peptide alpha-type 1 (ins-21).